The sequence spans 1041 residues: Toll-like receptor 8 (1041 aa).

The signal sequence occupies residues 1–26 (MENMFLQSSMLTCIFLLISGSCELCA). Over 27–827 (EENFSRSYPC…ELTTCVSDVT (801 aa)) the chain is Extracellular. 5 N-linked (GlcNAc...) asparagine glycosylation sites follow: Asn29, Asn42, Asn80, Asn88, and Asn115. Cys36 and Cys49 are oxidised to a cystine. 6 LRR repeats span residues 126-147 (NLRELLLEDNQLPQIPSGLPES), 148-168 (LTELSLIQNNIYNITKEGISR), 171-193 (NLKNLYLAWNCYFNKVCEKTNIE), 202-223 (NLELLSLSFNSLSHVPPKLPSS), 224-244 (LRKLFLSNTQIKYISEEDFKG), and 247-268 (NLTLLDLSGNCPRCFNAPFPCV). Residue Asn160 is glycosylated (N-linked (GlcNAc...) asparagine). Cys181 and Cys187 are oxidised to a cystine. N-linked (GlcNAc...) asparagine glycosylation is present at Asn247. Cystine bridges form between Cys257–Cys270 and Cys260–Cys267. Residues Asn285 and Asn293 are each glycosylated (N-linked (GlcNAc...) asparagine). LRR repeat units lie at residues 288–309 (QLRYLNLSSTSLRKINAAWFKN), 312–334 (HLKVLDLEFNYLVGEIASGAFLT), and 338–360 (RLEILDLSFNYIKGSYPQHINIS). N-linked (GlcNAc...) asparagine glycans are attached at residues Asn358 and Asn362. 3 LRR repeats span residues 368–389 (SLRALHLRGYVFQELREDDFQP), 395–416 (NLSTINLGINFIKQIDFKLFQN), and 419–440 (NLEIIYLSENRISPLVKDTRQS). Residues Asn395 and Asn416 are each glycosylated (N-linked (GlcNAc...) asparagine). N-linked (GlcNAc...) asparagine glycosylation occurs at Asn443. A disulfide bond links Cys479 and Cys509. LRR repeat units follow at residues 482–503 (YGKALDLSLNSIFFIGPNQFEN), 506–527 (DIACLNLSANSNAQVLSGTEFS), 531–551 (HVKYLDLTNNRLDFDNASALT), and 555–577 (DLEVLDLSYNSHYFRIAGVTHHL). N-linked (GlcNAc...) asparagine glycosylation is found at Asn511 and Asn546. N-linked (GlcNAc...) asparagine glycans are attached at residues Asn582 and Asn590. LRR repeat units lie at residues 585 to 606 (NLKVLNLSHNNIYTLTDKYNLE), 609 to 630 (SLVELVFSGNRLDILWNDDDNR), 640 to 661 (NLTRLDLSLNRLKHIPNEAFLN), 665 to 685 (SLTELHINDNMLKFFNWTLLQ), 689 to 710 (RLELLDLRGNKLLFLTDSLSDF), 713 to 734 (SLRTLLLSHNRISHLPSGFLSE), and 737 to 758 (SLKHLDLSSNLLKTINKSALET). Asn640 and Asn680 each carry an N-linked (GlcNAc...) asparagine glycan. N-linked (GlcNAc...) asparagine glycosylation occurs at Asn752. One can recognise an LRRCT domain in the interval 772–824 (NPFECTCDIGDFRRWMDEHLNVKIPRLVDVICASPGDQRGKSIVSLELTTCVS). A disulfide bridge links Cys776 with Cys803. The chain crosses the membrane as a helical span at residues 828 to 848 (AVILFFFTFFITTMVMLAALA). Over 849-1041 (HHLFYWDVWF…NMYVDSIKQY (193 aa)) the chain is Cytoplasmic. In terms of domain architecture, TIR spans 878 to 1022 (TFYDAYISYD…LFWQTLRNVV (145 aa)).

It belongs to the Toll-like receptor family. Homodimer. Interacts with MYD88 via their respective TIR domains. Interacts with UNC93B1. Interacts with BTK. Interacts with SMPDL3B. Post-translationally, ubiquitinated by RNF216; leading to degradation by the proteasome. In terms of processing, proteolytic processing occurs in monocytes and monocyte-derived macrophages by both furin-like proprotein convertase and cathepsins. The cleavage is necessary for dimer formation and subsequent activation. In terms of tissue distribution, expressed in myeloid dendritic cells, monocytes, and monocyte-derived dendritic cells.

It is found in the endosome membrane. Activated by RNAs having enough uridines. Endosomal receptor that plays a key role in innate and adaptive immunity. Controls host immune response against pathogens through recognition of RNA degradation products specific to microorganisms that are initially processed by RNASET2. Recognizes GU-rich single-stranded RNA (GU-rich RNA) derived from SARS-CoV-2, SARS-CoV-1 and HIV-1 viruses. Upon binding to agonists, undergoes dimerization that brings TIR domains from the two molecules into direct contact, leading to the recruitment of TIR-containing downstream adapter MYD88 through homotypic interaction. In turn, the Myddosome signaling complex is formed involving IRAK4, IRAK1, TRAF6, TRAF3 leading to activation of downstream transcription factors NF-kappa-B and IRF7 to induce pro-inflammatory cytokines and interferons, respectively. The polypeptide is Toll-like receptor 8 (Homo sapiens (Human)).